The chain runs to 571 residues: MTLSPEDLKTIEKYALQNAVKYEKAPQSKAVMGKVMGECPQLRANPGAVSTALKSIVSEIAKGNPEAWKTRLSEIAPELIEALNVKKEPEKGLKPLEGAEPGKVVMRFAPNPNGPGTLGSARGMVVNSEYVKMYKGKFVLRFDDTDPDIKRPMLEAYDWYLDDFKWLGVVPDRVVYASDHFPIYYDYARKLIEMGKAYVCFCKGEDFKRLKDAKQACPHRDTSPEENLMHWEKMLAGEYEDQQAVLRIKTDIEHKDPALRDWGAFRIRKMSHPRAEIGNKYVVWPLLDFAGAIEDHELGMTHIIRGKDLIDSEKRQGYIYKYFGWTYPKTTHWGRVKIHEFGKFSTSSLRKAIEAGEYSGWDDPRLPTIRAIRRRGIQAEALKKFMIEMGVGMTDVSISMESLYAENRKIVDPVANRYFFVWAPVELEIAGMEPTVAKLPLHPTDHSRGVREIAVGNKVLVCAEDVEKLELGSVIRLKDFCNIEITSLSPLQAKHSDVSLEALKKAKAKIVHWAPVDGISVKVRGPEGDLEGIGEKGIVGELDKIVQFERFGFCRIDAVSEEKVVAYFAHK.

The short motif at 110-120 (PNPNGPGTLGS) is the 'HIGH' region element.

Belongs to the class-I aminoacyl-tRNA synthetase family. Glutamate--tRNA ligase type 2 subfamily.

The protein localises to the cytoplasm. The catalysed reaction is tRNA(Glu) + L-glutamate + ATP = L-glutamyl-tRNA(Glu) + AMP + diphosphate. Catalyzes the attachment of glutamate to tRNA(Glu) in a two-step reaction: glutamate is first activated by ATP to form Glu-AMP and then transferred to the acceptor end of tRNA(Glu). The polypeptide is Glutamate--tRNA ligase (Methanosarcina acetivorans (strain ATCC 35395 / DSM 2834 / JCM 12185 / C2A)).